The chain runs to 306 residues: Armadillo repeat-containing protein 10 (306 aa).

The helical transmembrane segment at 7 to 29 (VGWVAAGLVLGAGACYCIYRLTR) threads the bilayer. A Phosphoserine modification is found at S43. T48 carries the post-translational modification Phosphothreonine. The ARM repeat unit spans residues 101–143 (GGIPIVGSKINSLNQSIKEKALNALNNLSVNVENQTKIKIYVR).

In terms of assembly, interacts with the DNA-binding domain of p53/TP53.

The protein resides in the endoplasmic reticulum membrane. It is found in the mitochondrion outer membrane. Its function is as follows. May play a role in cell survival and cell growth. May suppress the transcriptional activity of p53/TP53. This Rattus norvegicus (Rat) protein is Armadillo repeat-containing protein 10 (Armc10).